The sequence spans 257 residues: Imidazole glycerol phosphate synthase subunit HisF (257 aa).

Residues Asp11 and Asp130 contribute to the active site.

This sequence belongs to the HisA/HisF family. Heterodimer of HisH and HisF.

Its subcellular location is the cytoplasm. It carries out the reaction 5-[(5-phospho-1-deoxy-D-ribulos-1-ylimino)methylamino]-1-(5-phospho-beta-D-ribosyl)imidazole-4-carboxamide + L-glutamine = D-erythro-1-(imidazol-4-yl)glycerol 3-phosphate + 5-amino-1-(5-phospho-beta-D-ribosyl)imidazole-4-carboxamide + L-glutamate + H(+). It participates in amino-acid biosynthesis; L-histidine biosynthesis; L-histidine from 5-phospho-alpha-D-ribose 1-diphosphate: step 5/9. IGPS catalyzes the conversion of PRFAR and glutamine to IGP, AICAR and glutamate. The HisF subunit catalyzes the cyclization activity that produces IGP and AICAR from PRFAR using the ammonia provided by the HisH subunit. This Shewanella denitrificans (strain OS217 / ATCC BAA-1090 / DSM 15013) protein is Imidazole glycerol phosphate synthase subunit HisF.